Reading from the N-terminus, the 435-residue chain is MQVSVETTQGLERRLTISVPAEKVDVEVKNRLRQISKTQRINGFRPGKVPPSVVQKRFGKSVRQEVAGEIMQRNFVDAIVAEKINPAGRPSFVAKSNEDGKALEFEATFEIYPVVELKDLEKIAIERPEVDVTDADLDEMFVTLQKQHQTWKENKRKTKSGDKLTLDFTGRVDGEEFEGGKAEGFELELGAGRMIPGFEKEVTGMKAGDEATIKVTFPEDYHAENLKGKDAEFDIVIHKTEGPILPEIDEEFAKLFGIEEGGVEALRVEVSKNMARELTQAVKAKVKTQVIDGLLAGHEVDLPSALVTQEVDVLRQQAMQRFQGQMDPKNLPQLPAEMFTEQAERRVKIGLLLGEVIKVNELKVDETKVNELIASAASAYEDPKEVIEYYANNNELMQQMQNVALEEQAVELLVEKAKVSDKKASFNEIMNPEAK.

Residues 161–246 (GDKLTLDFTG…IHKTEGPILP (86 aa)) form the PPIase FKBP-type domain.

This sequence belongs to the FKBP-type PPIase family. Tig subfamily.

The protein resides in the cytoplasm. It carries out the reaction [protein]-peptidylproline (omega=180) = [protein]-peptidylproline (omega=0). Functionally, involved in protein export. Acts as a chaperone by maintaining the newly synthesized protein in an open conformation. Functions as a peptidyl-prolyl cis-trans isomerase. The protein is Trigger factor of Colwellia psychrerythraea (strain 34H / ATCC BAA-681) (Vibrio psychroerythus).